The chain runs to 228 residues: Ornithine decarboxylase antizyme 1 (228 aa).

Residues 17 to 55 (REKEGDKPSATIHASRTMPLLSLHSRGGSSSESSRVSLH) are disordered. The span at 36–55 (LLSLHSRGGSSSESSRVSLH) shows a compositional bias: low complexity.

It belongs to the ODC antizyme family. In terms of assembly, interacts with ODC1 and thereby sterically blocks ODC homodimerization. Forms a ternary complex with PSMB4 and OAZ1 before PSMB4 is incorporated into the 20S proteasome. Interacts with AZIN2; this interaction disrupts the interaction between the antizyme and ODC1. Interacts with FAM171A1.

Ornithine decarboxylase (ODC) antizyme protein that negatively regulates ODC activity and intracellular polyamine biosynthesis and uptake in response to increased intracellular polyamine levels. Binds to ODC monomers, inhibiting the assembly of the functional ODC homodimer, and targets the monomers for ubiquitin-independent proteolytic destruction by the 26S proteasome. Triggers ODC degradation by inducing the exposure of a cryptic proteasome-interacting surface of ODC. Stabilizes AZIN2 by interfering with its ubiquitination. Also inhibits cellular uptake of polyamines by inactivating the polyamine uptake transporter. SMAD1/OAZ1/PSMB4 complex mediates the degradation of the CREBBP/EP300 repressor SNIP1. Involved in the translocation of AZIN2 from ER-Golgi intermediate compartment (ERGIC) to the cytosol. The protein is Ornithine decarboxylase antizyme 1 (OAZ1) of Homo sapiens (Human).